The following is a 178-amino-acid chain: Ribosome maturation factor RimP (178 aa).

The protein belongs to the RimP family.

The protein localises to the cytoplasm. Its function is as follows. Required for maturation of 30S ribosomal subunits. The protein is Ribosome maturation factor RimP of Streptococcus pyogenes serotype M3 (strain ATCC BAA-595 / MGAS315).